The chain runs to 229 residues: Large ribosomal RNA subunit accumulation protein YCED homolog 2, chloroplastic (229 aa).

The transit peptide at 1–42 directs the protein to the chloroplast; the sequence is MDVRCLISPNLLNSKIKVSGNTHHLPFSSLSKKHQASSPIQA.

This sequence belongs to the DUF177 domain family.

It localises to the plastid. It is found in the chloroplast. May play a role in synthesis, processing and/or stability of 23S rRNA. The chain is Large ribosomal RNA subunit accumulation protein YCED homolog 2, chloroplastic from Arabidopsis thaliana (Mouse-ear cress).